Reading from the N-terminus, the 377-residue chain is MAKRDYYEVLGVGKNASDDEIKKAYRKLAMKFHPDRNPDSKDAEEKFKEAKEAYEMLSDPEKKAAYDQYGHAGVDPNMAGGFGGAQGYGGFAEAFGDIFGDIFGQGGGGRRGGGPQAYRGADLRYSMEISLEQAAHGHEAQIRVPHWDDCDHCHGNGAEPGSSVETCPTCHGAGQVRVSQGFFTMQQTCPKCHGSGKFIPKPCTKCHGQGKLKSQKTLEVKIPAGIDEGMRIRSSGNGEPGINGGPPGDLYVEVHIKPHAVFERDGDDLHCQMPISFATAALGGDLEVPTLSGKATFPVPEATQSGKTFRLRGKGIKGVRSGYPGDLYVHVNVETPVKLTEAQKEMLRQFDRSVHEGGSRHSPQETSWLDKVKSFFS.

In terms of domain architecture, J spans 5-70; the sequence is DYYEVLGVGK…EKKAAYDQYG (66 aa). A CR-type zinc finger spans residues 137-215; sequence GHEAQIRVPH…CHGQGKLKSQ (79 aa). Cys150, Cys153, Cys167, Cys170, Cys189, Cys192, Cys203, and Cys206 together coordinate Zn(2+). CXXCXGXG motif repeat units follow at residues 150-157, 167-174, 189-196, and 203-210; these read CDHCHGNG, CPTCHGAG, CPKCHGSG, and CTKCHGQG.

Belongs to the DnaJ family. As to quaternary structure, homodimer. It depends on Zn(2+) as a cofactor.

The protein resides in the cytoplasm. Functionally, participates actively in the response to hyperosmotic and heat shock by preventing the aggregation of stress-denatured proteins and by disaggregating proteins, also in an autonomous, DnaK-independent fashion. Unfolded proteins bind initially to DnaJ; upon interaction with the DnaJ-bound protein, DnaK hydrolyzes its bound ATP, resulting in the formation of a stable complex. GrpE releases ADP from DnaK; ATP binding to DnaK triggers the release of the substrate protein, thus completing the reaction cycle. Several rounds of ATP-dependent interactions between DnaJ, DnaK and GrpE are required for fully efficient folding. Also involved, together with DnaK and GrpE, in the DNA replication of plasmids through activation of initiation proteins. The polypeptide is Chaperone protein DnaJ (Cupriavidus taiwanensis (strain DSM 17343 / BCRC 17206 / CCUG 44338 / CIP 107171 / LMG 19424 / R1) (Ralstonia taiwanensis (strain LMG 19424))).